We begin with the raw amino-acid sequence, 689 residues long: Elongation factor G (689 aa).

Residues 9–283 (AKFRNIGIMA…AIVEFMPSPL (275 aa)) form the tr-type G domain. Residues 18 to 25 (AHIDAGKT), 82 to 86 (DTPGH), and 136 to 139 (NKMD) each bind GTP.

This sequence belongs to the TRAFAC class translation factor GTPase superfamily. Classic translation factor GTPase family. EF-G/EF-2 subfamily.

It is found in the cytoplasm. In terms of biological role, catalyzes the GTP-dependent ribosomal translocation step during translation elongation. During this step, the ribosome changes from the pre-translocational (PRE) to the post-translocational (POST) state as the newly formed A-site-bound peptidyl-tRNA and P-site-bound deacylated tRNA move to the P and E sites, respectively. Catalyzes the coordinated movement of the two tRNA molecules, the mRNA and conformational changes in the ribosome. The protein is Elongation factor G of Clostridium botulinum (strain Kyoto / Type A2).